The chain runs to 401 residues: Chalcone synthase 1 (401 aa).

Cys-168 is a catalytic residue.

This sequence belongs to the thiolase-like superfamily. Chalcone/stilbene synthases family.

It catalyses the reaction (E)-4-coumaroyl-CoA + 3 malonyl-CoA + 3 H(+) = 2',4,4',6'-tetrahydroxychalcone + 3 CO2 + 4 CoA. It functions in the pathway secondary metabolite biosynthesis; flavonoid biosynthesis. Functionally, the primary product of this enzyme is 4,2',4',6'-tetrahydroxychalcone (also termed naringenin-chalcone or chalcone) which can under specific conditions spontaneously isomerize into naringenin. The protein is Chalcone synthase 1 (CHS1) of Sorghum bicolor (Sorghum).